Here is a 128-residue protein sequence, read N- to C-terminus: Ribonuclease P protein component (128 aa).

Belongs to the RnpA family. As to quaternary structure, consists of a catalytic RNA component (M1 or rnpB) and a protein subunit.

It carries out the reaction Endonucleolytic cleavage of RNA, removing 5'-extranucleotides from tRNA precursor.. RNaseP catalyzes the removal of the 5'-leader sequence from pre-tRNA to produce the mature 5'-terminus. It can also cleave other RNA substrates such as 4.5S RNA. The protein component plays an auxiliary but essential role in vivo by binding to the 5'-leader sequence and broadening the substrate specificity of the ribozyme. The chain is Ribonuclease P protein component from Prochlorococcus marinus (strain MIT 9303).